Here is a 525-residue protein sequence, read N- to C-terminus: Ribosomal protein S6 kinase beta-1 (525 aa).

The interval 1–54 (MRRRRRRDGFYPAPDFRDREAEDMAGVFDIDLDQPEDAGSEDELEEGGQLNESM) is disordered. A TOS motif motif is present at residues 28-32 (FDIDL). The span at 30-46 (IDLDQPEDAGSEDELEE) shows a compositional bias: acidic residues. The 262-residue stretch at 91 to 352 (FELLRVLGKG…AGEVQAHPFF (262 aa)) folds into the Protein kinase domain. Residues 97–105 (LGKGGYGKV) and Lys123 contribute to the ATP site. Catalysis depends on Asp218, which acts as the Proton acceptor. Thr252 is modified (phosphothreonine; by PDPK1). One can recognise an AGC-kinase C-terminal domain in the interval 353–423 (RHINWEELLA…VAPSVLESVK (71 aa)). Positions 380-399 (SQFDSKFTRQTPVDSPDDST) are disordered. Polar residues predominate over residues 381–399 (QFDSKFTRQTPVDSPDDST). Ser394 is subject to Phosphoserine. At Thr412 the chain carries Phosphothreonine; by MTOR, NEK6 and NEK7. Positions 424–525 (EKFSFEPKIR…KRPEHLRMNL (102 aa)) are autoinhibitory domain. Ser434 and Ser441 each carry phosphoserine. Thr444 bears the Phosphothreonine mark. A phosphoserine mark is found at Ser447 and Ser452. The residue at position 516 (Lys516) is an N6-acetyllysine.

This sequence belongs to the protein kinase superfamily. AGC Ser/Thr protein kinase family. S6 kinase subfamily. Interacts with PPP1R9A/neurabin-1. Interacts with RPTOR. Interacts with IRS1. Interacts with EIF3B and EIF3C. Interacts with TRAF4. Interacts with POLDIP3. Interacts (via N-terminus) with IER5. As to quaternary structure, (Microbial infection) Interacts with Mumps virus phosphoprotein; this interaction may play a role in the viral replication and transcription. Post-translationally, phosphorylation at Thr-412 is regulated by mTORC1. The phosphorylation at this site is maintained by an agonist-dependent autophosphorylation mechanism. Activated by phosphorylation at Thr-252 by PDPK1. Dephosphorylation by PPP1CC at Thr-412 in mitochondrion. Widely expressed.

It is found in the synapse. The protein localises to the synaptosome. It localises to the mitochondrion outer membrane. The protein resides in the mitochondrion. Its subcellular location is the nucleus. It is found in the cytoplasm. The catalysed reaction is L-seryl-[protein] + ATP = O-phospho-L-seryl-[protein] + ADP + H(+). It catalyses the reaction L-threonyl-[protein] + ATP = O-phospho-L-threonyl-[protein] + ADP + H(+). Activation requires multiple phosphorylation events on serine/threonine residues. Activation appears to be first mediated by phosphorylation of multiple sites in the autoinhibitory domain, which facilitates phosphorylation at Thr-412, disrupting the autoinhibitory mechanism and allowing phosphorylation of Thr-252 by PDPK1. The active conformation of the kinase is believed to be stabilized by a mechanism involving three conserved phosphorylation sites located in the kinase domain activation loop (Thr-252) and in the AGC-kinase C-terminal domain (Ser-394 in the middle of the tail/linker region and Thr-412 within a hydrophobic motif at its end). Activated by mTORC1; isoform Alpha I and isoform Alpha II are sensitive to rapamycin, which inhibits activating phosphorylation at Thr-412. Activated by PDPK1. Serine/threonine-protein kinase that acts downstream of mTOR signaling in response to growth factors and nutrients to promote cell proliferation, cell growth and cell cycle progression. Regulates protein synthesis through phosphorylation of EIF4B, RPS6 and EEF2K, and contributes to cell survival by repressing the pro-apoptotic function of BAD. Under conditions of nutrient depletion, the inactive form associates with the EIF3 translation initiation complex. Upon mitogenic stimulation, phosphorylation by the mechanistic target of rapamycin complex 1 (mTORC1) leads to dissociation from the EIF3 complex and activation. The active form then phosphorylates and activates several substrates in the pre-initiation complex, including the EIF2B complex and the cap-binding complex component EIF4B. Also controls translation initiation by phosphorylating a negative regulator of EIF4A, PDCD4, targeting it for ubiquitination and subsequent proteolysis. Promotes initiation of the pioneer round of protein synthesis by phosphorylating POLDIP3/SKAR. In response to IGF1, activates translation elongation by phosphorylating EEF2 kinase (EEF2K), which leads to its inhibition and thus activation of EEF2. Also plays a role in feedback regulation of mTORC2 by mTORC1 by phosphorylating MAPKAP1/SIN1, MTOR and RICTOR, resulting in the inhibition of mTORC2 and AKT1 signaling. Also involved in feedback regulation of mTORC1 and mTORC2 by phosphorylating DEPTOR. Mediates cell survival by phosphorylating the pro-apoptotic protein BAD and suppressing its pro-apoptotic function. Phosphorylates mitochondrial URI1 leading to dissociation of a URI1-PPP1CC complex. The free mitochondrial PPP1CC can then dephosphorylate RPS6KB1 at Thr-412, which is proposed to be a negative feedback mechanism for the RPS6KB1 anti-apoptotic function. Mediates TNF-alpha-induced insulin resistance by phosphorylating IRS1 at multiple serine residues, resulting in accelerated degradation of IRS1. In cells lacking functional TSC1-2 complex, constitutively phosphorylates and inhibits GSK3B. May be involved in cytoskeletal rearrangement through binding to neurabin. Phosphorylates and activates the pyrimidine biosynthesis enzyme CAD, downstream of MTOR. Following activation by mTORC1, phosphorylates EPRS and thereby plays a key role in fatty acid uptake by adipocytes and also most probably in interferon-gamma-induced translation inhibition. In Homo sapiens (Human), this protein is Ribosomal protein S6 kinase beta-1 (RPS6KB1).